Here is a 793-residue protein sequence, read N- to C-terminus: E3 UFM1-protein ligase 1 (793 aa).

N-acetylalanine is present on alanine 2. Residues 2–200 are mediates interaction with DDRGK1; sequence ADAWEEIRRL…RGLFSAITRP (199 aa). A required for E3 UFM1-protein ligase activity region spans residues 2–212; sequence ADAWEEIRRL…VNSLVSKYGF (211 aa). An involved in CDK5RAP3-binding region spans residues 121-250; that stretch reads DQLSEEVNDK…KAVFVPDIYS (130 aa). Residues 200 to 400 form a mediates interaction with TRIP4 region; it reads PTPVNSLVSK…NPVHLITEED (201 aa). The disordered stretch occupies residues 410–473; it reads VNTSKKDKKD…SSHGGKKKPD (64 aa). Position 433 is an omega-N-methylarginine (arginine 433). Serine 458 and serine 462 each carry phosphoserine. The segment at 490-683 is mediates interaction with CDK5RAP3; that stretch reads IQDAPEEFIS…QLKVTEDPAL (194 aa). At threonine 535 the chain carries Phosphothreonine. Positions 742 to 765 are disordered; sequence NKKTGQGEDPSSDELDKEQHDVTN. Residues serine 752 and serine 753 each carry the phosphoserine modification.

The protein belongs to the UFL1 family. In terms of assembly, catalytic component of the UFM1 ribosome E3 ligase (UREL) complex, composed of UFL1, DDRGK1 and CDK5RAP3. Interacts with E2-like enzyme UFC1. Interacts with RELA. Interacts with NBN; promoting recruitment to double-strand breaks following DNA damage. Interacts (when phosphorylated) with YWHAG/14-3-3-gamma; sequestering UFL1 and preventing its association with PDCD1/PD-1 substrate. Ubiquitinated, leading to its degradation by the proteasome. Interaction with CDK5RAP3 protects both proteins against ubiquitination and degradation via the proteasome. In terms of processing, phosphorylated at Ser-462 by ATM, enhancing protein ligase activity and promoting ATM activation in a positive feedback loop. Phosphorylation at Thr-535 by AMPK promotes its interaction with YWHAG/14-3-3-gamma, thereby preventing UFL1 association with PDCD1/PD-1 substrate. Ubiquitously expressed with higher expression in pancreatic islets and other secretory tissues. In the embryonic brain at 17 dpc, detected in Sox2-positive neural stem cells and in Slc1a3/GLAST-positive radial glia. In perinatal brain, highly expressed in Slc1a3-positive Bergmann glia of the cerebellum. Continues to be expressed in Bergmann glia of adult brain at 16 weeks. Expressed in adult heart. Highly expressed in the intestinal exocrine cells.

The protein resides in the endoplasmic reticulum membrane. Its subcellular location is the cytoplasm. It is found in the cytosol. The protein localises to the nucleus. It localises to the chromosome. Functionally, E3 protein ligase that mediates ufmylation, the covalent attachment of the ubiquitin-like modifier UFM1 to lysine residues on target proteins, and which plays a key role in various processes, such as ribosome recycling, response to DNA damage, interferon response or reticulophagy (also called ER-phagy). Catalyzes ufmylation of many protein, such as CD274/PD-L1, CDK5RAP3, CYB5R3, DDRGK1, EIF6, histone H4, MRE11, P4HB, PDCD1/PD-1, TRIP4, RPN1, RPS20/uS10, RPL10/uL16, RPL26/uL24, SYVN1/HRD1 and TP53/p53. As part of the UREL complex, plays a key role in ribosome recycling by catalyzing mono-ufmylation of RPL26/uL24 subunit of the 60S ribosome. Ufmylation of RPL26/uL24 occurs on free 60S ribosomes following ribosome dissociation: it weakens the junction between post-termination 60S subunits and SEC61 translocons, promoting release and recycling of the large ribosomal subunit from the endoplasmic reticulum membrane. Ufmylation of RPL26/uL24 and subsequent 60S ribosome recycling either take place after normal termination of translation or after ribosome stalling during cotranslational translocation at the endoplasmic reticulum. Involved in reticulophagy in response to endoplasmic reticulum stress by mediating ufmylation of proteins such as CYB5R3 and RPN1, thereby promoting lysosomal degradation of ufmylated proteins. Ufmylation in response to endoplasmic reticulum stress is essential for processes such as hematopoiesis, blood vessel morphogenesis or inflammatory response. Mediates ufmylation of DDRGK1 and CDK5RAP3; the role of these modifications is however unclear: as both DDRGK1 and CDK5RAP3 act as substrate adapters for ufmylation, it is uncertain whether ufmylation of these proteins is a collateral effect or is required for ufmylation. Acts as a negative regulator of T-cell activation by mediating ufmylation and stabilization of PDCD1/PD-1. Also involved in the response to DNA damage: recruited to double-strand break sites following DNA damage and mediates monoufmylation of histone H4 and ufmylation of MRE11. Mediates ufmylation of TP53/p53, promoting its stability. Catalyzes ufmylation of TRIP4, thereby playing a role in nuclear receptor-mediated transcription. Required for hematopoietic stem cell function and hematopoiesis. The protein is E3 UFM1-protein ligase 1 of Mus musculus (Mouse).